The sequence spans 96 residues: Prokineticin Bm8-b (96 aa).

A signal peptide spans 1–19 (MKCFAQIVVLLLVIAFSHG). Disulfide bonds link Cys-32–Cys-50, Cys-37–Cys-78, Cys-60–Cys-86, and Cys-80–Cys-95.

It belongs to the AVIT (prokineticin) family. Expressed by the skin glands.

The protein resides in the secreted. Functionally, potent agonist for both PKR1/PROKR1 and PKR2/PROKR2, and inducer of a potent and long-lasting hyperalgesia. Also potentiates capsaicin-induced TRPV1 current, when tested on DRG neurons. At subnanomolar concentrations, this protein both induces potent chemotaxis of macrophages and stimulates LPS-induced production of the pro-inflammatory cytokines IL-1 and IL-12. In vivo, potently stimulates the contraction of the guinea-pig gastrointestinal (GI) smooth muscle (nanomolar concentration). The chain is Prokineticin Bm8-b from Bombina maxima (Giant fire-bellied toad).